Consider the following 335-residue polypeptide: Rho guanine nucleotide exchange factor 39 (335 aa).

In terms of domain architecture, DH spans 22–197; the sequence is KRACTARELL…SETAQRVHTI (176 aa). In terms of domain architecture, PH spans 227–331; that stretch reads WFLRQGWLLV…WYHSLTLAIS (105 aa).

The protein localises to the cell membrane. Promotes cell proliferation. The polypeptide is Rho guanine nucleotide exchange factor 39 (ARHGEF39) (Bos taurus (Bovine)).